Here is a 575-residue protein sequence, read N- to C-terminus: Protein NRT1/ PTR FAMILY 5.6 (575 aa).

The next 2 membrane-spanning stretches (helical) occupy residues 44–64 (AALFIIAIEFSERLSYFGLAT) and 88–108 (WSGVTTLMPLLGGFIADAYLG). The residue at position 112 (Thr112) is a Phosphothreonine. Transmembrane regions (helical) follow at residues 113 to 133 (VLVATTIYLMGLVLLTMSWFI), 153 to 173 (VAFFIAIYLISIGTGGHKPSL), 195 to 215 (FFNWWNVSLCAGILTAVTAVA), 223 to 243 (WGVAGIILTVVMAISLIIFFI), 339 to 359 (LIINVIPIWFSTLAFGICATQ), 375 to 395 (IGGFTVPPASMFTLTALTLII), 420 to 440 (ILQRIGTGMIFSLITMIIAAL), 457 to 477 (VIWLAPQFMVIGFADAFTLVG), 493 to 513 (LGIAFYLSVIGAASFLNNLLI), and 541 to 561 (FYWFLAGVIAANICVFVIVAK).

It belongs to the major facilitator superfamily. Proton-dependent oligopeptide transporter (POT/PTR) (TC 2.A.17) family. In terms of tissue distribution, expressed in stems, shoots, leaves, flowers and siliques.

The protein resides in the membrane. The chain is Protein NRT1/ PTR FAMILY 5.6 (NPF5.6) from Arabidopsis thaliana (Mouse-ear cress).